The primary structure comprises 281 residues: Beta-etherase (281 aa).

The GST N-terminal domain maps to 11–87 (DLQLESGCTI…YLDEKYPDRP (77 aa)). A disordered region spans residues 244–281 (GDPEPFVRQTGPAGAGGQALNKGPQTTKMPPRVAEKAD).

It belongs to the GST superfamily.

It is found in the cell inner membrane. Functionally, able to degrade various dimeric lignin compounds. Catalyzes the unique and reductive cleavage of arylglycerol-beta-aryl ether. The chain is Beta-etherase (ligE) from Sphingobium sp. (strain NBRC 103272 / SYK-6).